The following is a 161-amino-acid chain: Allophycocyanin alpha chain (161 aa).

Asn71 is subject to N4-methylasparagine. Cys81 serves as a coordination point for (2R,3E)-phycocyanobilin.

It belongs to the phycobiliprotein family. In terms of assembly, heterodimer of an alpha and a beta chain. In terms of processing, contains one covalently linked phycocyanobilin chromophore.

Its subcellular location is the plastid. The protein localises to the chloroplast thylakoid membrane. Light-harvesting photosynthetic bile pigment-protein from the phycobiliprotein complex. Allophycocyanin has a maximum absorption at approximately 650 nanometers. In Porphyra purpurea (Red seaweed), this protein is Allophycocyanin alpha chain (apcA).